We begin with the raw amino-acid sequence, 1333 residues long: snRNA-activating protein complex subunit 4 (1333 aa).

A disordered region spans residues 29–84; it reads HFEVSESSLSSDSEADSLPDEDLETAGAPILEEEGSSESSNDEEDPKDKALPEDPE. Acidic residues-rich tracts occupy residues 41-52 and 59-73; these read SEADSLPDEDLE and LEEE…DEED. Serine 68 carries the phosphoserine modification. Residues 84–133 are SNAPC5-binding; the sequence is ETCLQLNMVYQEVIREKLAEVSQLLAQNQEQQEEILFDLSGTKCPKVKDG. Positions 250-288 constitute a Myb-like 1 domain; sequence EEALLGNRLDSHDWEKISNINFEGARSAEEIRKFWQSSE. The HTH myb-type 1 domain maps to 289–343; it reads HPSISKQEWSTEEVERLKAIAATHGHLEWHLVAEELGTSRSAFQCLQKFQQYNKT. Positions 317–341 form a DNA-binding region, H-T-H motif; it reads WHLVAEELGTSRSAFQCLQKFQQYN. The 52-residue stretch at 344-395 folds into the Myb-like 2 domain; that stretch reads LKRKEWTEEEDHMLTQLVQEMRVGNHIPYRKIVYFMEGRDSMQLIYRWTKSL. HTH myb-type domains lie at 396–451 and 452–503; these read DPSL…HFSL and KKGR…RKKQ. 2 consecutive DNA-binding regions (H-T-H motif) follow at residues 424–447 and 476–499; these read WFKI…IRRL and WARI…KILA. The span at 503 to 515 shows a compositional bias: basic residues; it reads QHLQRKRGQRPRH. Disordered regions lie at residues 503–558, 662–702, 811–842, and 1079–1117; these read QHLQ…LEKS, LMKE…QNKQ, NAKN…LGSC, and LPSP…PEKA. Residues 516–546 show a composition bias toward low complexity; the sequence is SSQWSSSGSSSSSSEDYGSSSGSDGSSGSEN. Polar residues-rich tracts occupy residues 672-686 and 811-826; these read LPSS…NNTA and NAKN…TGEQ. An SNAPC2-binding region spans residues 1131–1247; that stretch reads AIVTWLKGCQ…NSIPTTLSPD (117 aa). A phosphoserine mark is found at serine 1252, serine 1254, serine 1301, and serine 1309. A disordered region spans residues 1282 to 1333; the sequence is PAAPDPVQSHLVSPGQRAPSPGEVSAPSPLDASDGLDDLNVLRTRRARHSRR. Residues 1324 to 1333 are compositionally biased toward basic residues; the sequence is RTRRARHSRR.

Part of the SNAPc composed of 5 subunits: SNAPC1, SNAPC2, SNAPC3, SNAPC4 and SNAPC5. SNAPC4 interacts with SNAPC1, SNAPC2, SNAPC5, BRF2 and TBP.

Its subcellular location is the nucleus. Functionally, part of the SNAPc complex required for the transcription of both RNA polymerase II and III small-nuclear RNA genes. Binds to the proximal sequence element (PSE), a non-TATA-box basal promoter element common to these 2 types of genes. Recruits TBP and BRF2 to the U6 snRNA TATA box. This chain is snRNA-activating protein complex subunit 4, found in Mus musculus (Mouse).